A 190-amino-acid polypeptide reads, in one-letter code: Ribosome hibernation promotion factor (190 aa).

Positions Arg-101 to Gln-190 are required for ribosome-binding.

Belongs to the HPF/YfiA ribosome-associated protein family. Long HPF subfamily. Interacts with 100S ribosomes during exponential growth, as 100S ribosomes decrease (after 28 hours) also found associated with 30s and 50S subunits.

Its subcellular location is the cytoplasm. Its function is as follows. Required and sufficient for dimerization of active 70S ribosomes into 100S ribosomes. 110S ribosomes are probably translationally inactive and may serve as a reservoir of easily reactivated ribosomes when necessary in the cell. Also reduces the translation efficiency of a small number of genes. Unlike E.coli, 100S ribosomes are present during exponential growth and decrease during stationary phase. This strain produces 30% fewer 100S ribosomes than strain N315 and RN4200 under the same growth conditions. The polypeptide is Ribosome hibernation promotion factor (Staphylococcus aureus (strain USA300)).